Consider the following 159-residue polypeptide: Phosphopantetheine adenylyltransferase (159 aa).

Ser-9 is a binding site for substrate. ATP is bound by residues 9–10 and His-17; that span reads SF. The substrate site is built by Lys-41, Leu-73, and Arg-87. Residues 88-90, Glu-98, and 123-129 contribute to the ATP site; these read GLR and YSYVSSS.

It belongs to the bacterial CoaD family. In terms of assembly, homohexamer. Mg(2+) serves as cofactor.

It is found in the cytoplasm. The catalysed reaction is (R)-4'-phosphopantetheine + ATP + H(+) = 3'-dephospho-CoA + diphosphate. It functions in the pathway cofactor biosynthesis; coenzyme A biosynthesis; CoA from (R)-pantothenate: step 4/5. Functionally, reversibly transfers an adenylyl group from ATP to 4'-phosphopantetheine, yielding dephospho-CoA (dPCoA) and pyrophosphate. This chain is Phosphopantetheine adenylyltransferase, found in Shouchella clausii (strain KSM-K16) (Alkalihalobacillus clausii).